Reading from the N-terminus, the 430-residue chain is Adenylosuccinate synthetase (430 aa).

Residues 11 to 17 and 39 to 41 contribute to the GTP site; these read GDEGKGK and GHT. Residue Asp-12 is the Proton acceptor of the active site. Asp-12 and Gly-39 together coordinate Mg(2+). Residues 12–15, 37–40, Thr-130, Arg-144, Asn-226, Thr-241, and Arg-305 each bind IMP; these read DEGK and NAGH. His-40 (proton donor) is an active-site residue. A substrate-binding site is contributed by 301–307; that stretch reads VTTGRKR. GTP-binding positions include Arg-307, 333-335, and 415-417; these read KLD and GTG.

This sequence belongs to the adenylosuccinate synthetase family. In terms of assembly, homodimer. Requires Mg(2+) as cofactor.

It is found in the cytoplasm. It catalyses the reaction IMP + L-aspartate + GTP = N(6)-(1,2-dicarboxyethyl)-AMP + GDP + phosphate + 2 H(+). It participates in purine metabolism; AMP biosynthesis via de novo pathway; AMP from IMP: step 1/2. In terms of biological role, plays an important role in the de novo pathway and in the salvage pathway of purine nucleotide biosynthesis. Catalyzes the first committed step in the biosynthesis of AMP from IMP. The chain is Adenylosuccinate synthetase from Scheffersomyces stipitis (strain ATCC 58785 / CBS 6054 / NBRC 10063 / NRRL Y-11545) (Yeast).